We begin with the raw amino-acid sequence, 109 residues long: Arminin 6560 (109 aa).

Residues 1 to 21 (MKCLFGFLFIMLVAFLQDVHG) form the signal peptide. A propeptide spanning residues 22–77 (VDSCIGKPCKVKGEDMKDIKEKKIEDIKEEIKNVKKEIFEDVDDELLDDNIRDDKI) is cleaved from the precursor. I106 bears the Isoleucine amide mark.

Belongs to the arminin family. As to expression, expressed in the ectodermal epithelium.

Its subcellular location is the secreted. It is found in the target cell membrane. Antimicrobial peptide with a broad-spectrum antimicrobial activity. Keeps its antibacterial activity under a wide range of salt concentrations that mimic physiological conditions of human blood, which is surprising, since Hydra is an obligate freshwater animal with nearly no salt tolerance. Does not affect red blood cells. The polypeptide is Arminin 6560 (Hydra vulgaris (Hydra)).